The following is a 368-amino-acid chain: GLABROUS1 enhancer-binding protein-like (368 aa).

Residues 1–123 (MAPKKAEEVV…TSDTEHVKKP (123 aa)) are disordered. Residues 17–31 (SEEEESGSSGEESES) show a composition bias toward acidic residues. Basic and acidic residues predominate over residues 35-47 (VPKKVESSQKPES). The segment covering 84-97 (TSGSAATVPESSTA) has biased composition (polar residues). Residues 100–123 (PLKEAAPEAIKKQKTSDTEHVKKP) are compositionally biased toward basic and acidic residues.

This sequence belongs to the GeBP family. In terms of assembly, mono-, di- and oligomers. Associated with the Mediator complex. Interacts with MED6. Interacts with MED10A, MED28 and MED32. Interacts with DEK3.

It is found in the nucleus. Its function is as follows. Transcription factor that binds promoters containing the CryR2 element, 5'-ACATAWCT-3'. The DNA-binding activity is decreased upon direct physical interaction with the mediator subunits and is modulated by redox conditions. The oxidized protein is the preferential binding form. The sequence is that of GLABROUS1 enhancer-binding protein-like from Arabidopsis thaliana (Mouse-ear cress).